Reading from the N-terminus, the 121-residue chain is Small ribosomal subunit protein uS13 (121 aa).

The tract at residues 91–121 (HRRGLPVRGQNSKNNARTRKGPRRTVANKKK) is disordered. Basic residues predominate over residues 106–121 (ARTRKGPRRTVANKKK).

The protein belongs to the universal ribosomal protein uS13 family. Part of the 30S ribosomal subunit. Forms a loose heterodimer with protein S19. Forms two bridges to the 50S subunit in the 70S ribosome.

In terms of biological role, located at the top of the head of the 30S subunit, it contacts several helices of the 16S rRNA. In the 70S ribosome it contacts the 23S rRNA (bridge B1a) and protein L5 of the 50S subunit (bridge B1b), connecting the 2 subunits; these bridges are implicated in subunit movement. Contacts the tRNAs in the A and P-sites. The polypeptide is Small ribosomal subunit protein uS13 (Bacillus cereus (strain AH187)).